The following is a 168-amino-acid chain: Envelope glycoprotein L (168 aa).

An N-terminal signal peptide occupies residues 1–22; the sequence is MMWKWVTLLLFVLVCGDNPVNA. Residues 25-138 are interaction with gH; sequence HNPFVCCHQK…TDSSGFKNNL (114 aa).

Belongs to the herpesviridae glycoprotein L family. In terms of assembly, interacts with glycoprotein H (gH); this interaction is necessary for the correct processing and cell surface expression of gH. The heterodimer gH/gL seems to interact with gB trimers during fusion.

The protein resides in the virion membrane. Its subcellular location is the host cell membrane. The protein localises to the host Golgi apparatus. It localises to the host trans-Golgi network. Its function is as follows. The heterodimer glycoprotein H-glycoprotein L is required for the fusion of viral and plasma membranes leading to virus entry into the host cell. Acts as a functional inhibitor of gH and maintains gH in an inhibited form. Upon binding to host integrins, gL dissociates from gH leading to activation of the viral fusion glycoproteins gB and gH. This Connochaetes taurinus (Blue wildebeest) protein is Envelope glycoprotein L.